A 205-amino-acid chain; its full sequence is Ribosomal RNA large subunit methyltransferase E (205 aa).

The S-adenosyl-L-methionine site is built by Gly60, Trp62, Asp80, Asp96, and Asp121. Lys161 functions as the Proton acceptor in the catalytic mechanism.

The protein belongs to the class I-like SAM-binding methyltransferase superfamily. RNA methyltransferase RlmE family.

The protein localises to the cytoplasm. The enzyme catalyses uridine(2552) in 23S rRNA + S-adenosyl-L-methionine = 2'-O-methyluridine(2552) in 23S rRNA + S-adenosyl-L-homocysteine + H(+). Specifically methylates the uridine in position 2552 of 23S rRNA at the 2'-O position of the ribose in the fully assembled 50S ribosomal subunit. This is Ribosomal RNA large subunit methyltransferase E from Azoarcus sp. (strain BH72).